The chain runs to 74 residues: Anionic peptide clone 9 (74 aa).

Residues 1 to 24 form the signal peptide; sequence MVSKSLIVLLLVSVLVSTFFTTEA.

This sequence belongs to the non-disulfide-bridged peptide (NDBP) superfamily. Long chain multifunctional peptide (group 2) family. Expressed by the venom gland.

The protein localises to the secreted. May be an antimicrobial peptide. The polypeptide is Anionic peptide clone 9 (Tityus costatus (Brazilian scorpion)).